Reading from the N-terminus, the 275-residue chain is 2,3,4,5-tetrahydropyridine-2,6-dicarboxylate N-succinyltransferase (275 aa).

Arginine 108 and aspartate 145 together coordinate substrate.

This sequence belongs to the transferase hexapeptide repeat family. In terms of assembly, homotrimer.

It is found in the cytoplasm. It catalyses the reaction (S)-2,3,4,5-tetrahydrodipicolinate + succinyl-CoA + H2O = (S)-2-succinylamino-6-oxoheptanedioate + CoA. Its pathway is amino-acid biosynthesis; L-lysine biosynthesis via DAP pathway; LL-2,6-diaminopimelate from (S)-tetrahydrodipicolinate (succinylase route): step 1/3. This Maricaulis maris (strain MCS10) (Caulobacter maris) protein is 2,3,4,5-tetrahydropyridine-2,6-dicarboxylate N-succinyltransferase.